The primary structure comprises 260 residues: tRNA pseudouridine synthase A (260 aa).

The Nucleophile role is filled by D60. Position 118 (Y118) interacts with substrate.

Belongs to the tRNA pseudouridine synthase TruA family. As to quaternary structure, homodimer.

It catalyses the reaction uridine(38/39/40) in tRNA = pseudouridine(38/39/40) in tRNA. Its function is as follows. Formation of pseudouridine at positions 38, 39 and 40 in the anticodon stem and loop of transfer RNAs. This chain is tRNA pseudouridine synthase A, found in Leuconostoc citreum (strain KM20).